A 932-amino-acid chain; its full sequence is Potassium voltage-gated channel subfamily KQT member 5 (932 aa).

The Cytoplasmic portion of the chain corresponds to 1 to 125 (MPRHHAGGEE…YNVLERPRGW (125 aa)). Residue serine 88 is modified to Phosphoserine. The chain crosses the membrane as a helical span at residues 126 to 146 (AFIYHAFVFLLVFGCLILSVF). Over 147–156 (STIPEHTKLA) the chain is Extracellular. Residues 157-177 (SSCLLILEFVMIVVFGLEFII) traverse the membrane as a helical segment. The Cytoplasmic segment spans residues 178–200 (RIWSAGCCCRYRGWQGRLRFARK). Residues 201 to 221 (PFCVIDTIVLIASIAVVSAKT) form a helical membrane-spanning segment. Residues 222–229 (QGNIFATS) lie on the Extracellular side of the membrane. The chain crosses the membrane as a helical; Voltage-sensor span at residues 230 to 252 (ALRSLRFLQILRMVRMDRRGGTW). A 1,2-diacyl-sn-glycero-3-phospho-(1D-myo-inositol-4,5-bisphosphate) contacts are provided by arginine 248 and lysine 264. Topologically, residues 253-266 (KLLGSVVYAHSKEL) are cytoplasmic. Residues 267 to 287 (ITAWYIGFLVLIFSSFLVYLV) traverse the membrane as a helical segment. Topologically, residues 288–298 (EKDANKEFSTY) are extracellular. The segment at residues 299–319 (ADALWWGTITLTTIGYGDKTP) is an intramembrane region (pore-forming). The Extracellular portion of the chain corresponds to 320–325 (LTWLGR). A helical transmembrane segment spans residues 326–346 (LLSAGFALLGISFFALPAGIL). Residues 347–932 (GSGFALKVQE…ALSLPHVKLK (586 aa)) lie on the Cytoplasmic side of the membrane. Lysine 361 lines the a 1,2-diacyl-sn-glycero-3-phospho-(1D-myo-inositol-4,5-bisphosphate) pocket. The interval 370–378 (AANLIQCVW) is interaction with CALM. Positions 404 to 465 (SPTKKEQGEA…GSPTKVQKSW (62 aa)) are disordered. Over residues 431 to 440 (RGQSIKSRQA) the composition is skewed to polar residues. Position 447 is a phosphoserine (serine 447). The interaction with CALM stretch occupies residues 521–528 (VIRAIRIM). The tract at residues 655–678 (SDYQSPVDSKDLSGSAQNSGCLSR) is disordered. Serine 831 bears the Phosphoserine mark. Acidic residues predominate over residues 876-885 (VGPEETETDT). The segment at 876-919 (VGPEETETDTFDAAPQPAREAAFASDSLRTGRSRSSQSICKAGE) is disordered. The segment covering 888–899 (AAPQPAREAAFA) has biased composition (low complexity). The segment covering 902-914 (SLRTGRSRSSQSI) has biased composition (polar residues).

It belongs to the potassium channel family. KQT (TC 1.A.1.15) subfamily. Kv7.5/KCNQ5 sub-subfamily. In terms of assembly, homotetramer; forms a functional homotetrameric channel resulting in the expression of a small M-current. Heterotetramer with KCNQ3; forms heterotetrameric M-channel responsible for the native M-current. Heterotetramer with KCNQ1; forms a functional voltage-gated potassium channel. Interacts (via C-terminus) with calmodulin/CALM1; forms a heterooctameric structure (with 4:4 KCNQ1:CALM stoichiometry); the interaction is calcium-independent, constitutive and participates in the channel function. In terms of tissue distribution, strongly expressed in brain and skeletal muscle. In brain, expressed in cerebral cortex, occipital pole, frontal lobe and temporal lobe. Lower levels in hippocampus and putamen. Low to undetectable levels in medulla, cerebellum and thalamus.

It localises to the cell membrane. The catalysed reaction is K(+)(in) = K(+)(out). Its activity is regulated as follows. Phosphatidylinositol-4,5-bisphosphate (PIP2) is essential to activate KCNQ5 channel by inducing the coupling of the voltage-sensing domain (VSD) and the pore-forming domain (PD). Calcium suppresses KCNQ5 channel current through calcium-bound CALM C-terminus. Therefore CALM acts as calcium sensor that controls channel activity. Activated by niflumic acid and the anticonvulsant retigabine. Inhibited by barium, linopirdine, XE991 and tetraethylammonium (as homomer). Insensitive to tetraethylammonium in KCNQ3-KCNQ5 heteromers. Functionally, pore-forming subunit of the voltage-gated potassium (Kv) channel broadly expressed in brain and involved in the regulation of neuronal excitability. Associates with KCNQ3/Kv7.3 pore-forming subunit to form a potassium channel which contributes to M-type current, a slowly activating and deactivating potassium conductance which plays a critical role in determining the subthreshold electrical excitability of neurons. Contributes, with other potassium channels, to the molecular diversity of a heterogeneous population of M-channels, varying in kinetic and pharmacological properties, which underlie this physiologically important current. Also forms a functional channel with KCNQ1/Kv7.1 subunit that may contribute to vasoconstriction and hypertension. Channel may be selectively permeable in vitro to other cations besides potassium, in decreasing order of affinity K(+) = Rb(+) &gt; Cs(+) &gt; Na(+). Similar to the native M-channel, KCNQ3-KCNQ5 potassium channel is suppressed by activation of the muscarinic acetylcholine receptor CHRM1. This is Potassium voltage-gated channel subfamily KQT member 5 from Homo sapiens (Human).